The chain runs to 208 residues: 28 kDa heat- and acid-stable phosphoprotein homolog (208 aa).

2 disordered regions span residues 1–133 (MAGG…VTKK) and 145–208 (LSRR…LGLA). A compositionally biased stretch (basic and acidic residues) spans 16-44 (FGRDYERSKGKISRDRVYDEEDIIKRNQE). Low complexity-rich tracts occupy residues 52–69 (GSES…NKSK) and 84–100 (RNPN…PTTK). Positions 105-121 (SDSEDDSDKESDSEDEI) are enriched in acidic residues. Positions 137-206 (INVNAKVELS…EKMAERRRLG (70 aa)) form a coiled coil. 2 stretches are compositionally biased toward basic and acidic residues: residues 145-154 (LSRREKEELA) and 162-208 (QNEK…LGLA).

It belongs to the PDAP1 family.

The polypeptide is 28 kDa heat- and acid-stable phosphoprotein homolog (Dictyostelium discoideum (Social amoeba)).